The following is a 65-amino-acid chain: MRLLLVFFFLSLLDQAPPARSGISRVRICREKGGHCDADCHLEERHLGGCRAAYLTFCCRKESPR.

The N-terminal stretch at 1 to 21 (MRLLLVFFFLSLLDQAPPARS) is a signal peptide. 3 disulfides stabilise this stretch: C29–C58, C36–C50, and C40–C59. The propeptide occupies 62-65 (ESPR).

It belongs to the beta-defensin family. In terms of tissue distribution, lowly expressed in spleen, and expressed at lower levels in kidney, lung and testis.

Its subcellular location is the secreted. In terms of biological role, has antimicrobial activity. This chain is Defensin-B3, found in Ornithorhynchus anatinus (Duckbill platypus).